Here is a 513-residue protein sequence, read N- to C-terminus: ATP synthase subunit alpha (513 aa).

169-176 (GDRQTGKT) lines the ATP pocket.

This sequence belongs to the ATPase alpha/beta chains family. F-type ATPases have 2 components, CF(1) - the catalytic core - and CF(0) - the membrane proton channel. CF(1) has five subunits: alpha(3), beta(3), gamma(1), delta(1), epsilon(1). CF(0) has three main subunits: a(1), b(2) and c(9-12). The alpha and beta chains form an alternating ring which encloses part of the gamma chain. CF(1) is attached to CF(0) by a central stalk formed by the gamma and epsilon chains, while a peripheral stalk is formed by the delta and b chains.

It localises to the cell inner membrane. It carries out the reaction ATP + H2O + 4 H(+)(in) = ADP + phosphate + 5 H(+)(out). Functionally, produces ATP from ADP in the presence of a proton gradient across the membrane. The alpha chain is a regulatory subunit. The sequence is that of ATP synthase subunit alpha from Shewanella oneidensis (strain ATCC 700550 / JCM 31522 / CIP 106686 / LMG 19005 / NCIMB 14063 / MR-1).